A 476-amino-acid chain; its full sequence is Sulfate adenylyltransferase subunit 1 (476 aa).

The region spanning 24 to 241 (KSLLRFLTCG…EDVDFVQEQE (218 aa)) is the tr-type G domain. Positions 33-40 (GSVDDGKS) are G1. 33–40 (GSVDDGKS) provides a ligand contact to GTP. Residues 91 to 95 (GITID) form a G2 region. The interval 112–115 (DTPG) is G3. GTP-binding positions include 112-116 (DTPGH) and 167-170 (NKMD). Positions 167–170 (NKMD) are G4. The G5 stretch occupies residues 205 to 207 (SAL).

This sequence belongs to the TRAFAC class translation factor GTPase superfamily. Classic translation factor GTPase family. CysN/NodQ subfamily. In terms of assembly, heterodimer composed of CysD, the smaller subunit, and CysN.

The catalysed reaction is sulfate + ATP + H(+) = adenosine 5'-phosphosulfate + diphosphate. It participates in sulfur metabolism; hydrogen sulfide biosynthesis; sulfite from sulfate: step 1/3. Its function is as follows. With CysD forms the ATP sulfurylase (ATPS) that catalyzes the adenylation of sulfate producing adenosine 5'-phosphosulfate (APS) and diphosphate, the first enzymatic step in sulfur assimilation pathway. APS synthesis involves the formation of a high-energy phosphoric-sulfuric acid anhydride bond driven by GTP hydrolysis by CysN coupled to ATP hydrolysis by CysD. The sequence is that of Sulfate adenylyltransferase subunit 1 from Photobacterium profundum (strain SS9).